The following is a 114-amino-acid chain: UPF0342 protein SSP0954 (114 aa).

It belongs to the UPF0342 family.

The polypeptide is UPF0342 protein SSP0954 (Staphylococcus saprophyticus subsp. saprophyticus (strain ATCC 15305 / DSM 20229 / NCIMB 8711 / NCTC 7292 / S-41)).